A 259-amino-acid chain; its full sequence is MLVVVSPAKNLDFESDIPVKQFTQPAMLEDTEKLMEVCRTLSPADLSSLMKISDKLATLNANRFAEFTTPFTPDNARQAMYAFNGDVYTGLDAYSLDSDTVAYAQKHLRILSGLYGLLRPLDLMQAYRLEMGTKLANPEGKDLYAFWDDRITYVLNKALEAQGDNVLINLASNEYFKAVKKKSLDGMIITPTFKDCKNGQYKIISFFAKKARGLMARYILENRVEDVEGLKNFDVDGYVFSEEQSSSTELVYLRNQESE.

It belongs to the UPF0246 family.

In Alteromonas mediterranea (strain DSM 17117 / CIP 110805 / LMG 28347 / Deep ecotype), this protein is UPF0246 protein MADE_1015435.